A 376-amino-acid polypeptide reads, in one-letter code: Succinyl-diaminopimelate desuccinylase (376 aa).

Residue H66 participates in Zn(2+) binding. D68 is a catalytic residue. D99 lines the Zn(2+) pocket. E133 functions as the Proton acceptor in the catalytic mechanism. 3 residues coordinate Zn(2+): E134, E162, and H348.

It belongs to the peptidase M20A family. DapE subfamily. As to quaternary structure, homodimer. The cofactor is Zn(2+). It depends on Co(2+) as a cofactor.

The catalysed reaction is N-succinyl-(2S,6S)-2,6-diaminopimelate + H2O = (2S,6S)-2,6-diaminopimelate + succinate. It participates in amino-acid biosynthesis; L-lysine biosynthesis via DAP pathway; LL-2,6-diaminopimelate from (S)-tetrahydrodipicolinate (succinylase route): step 3/3. In terms of biological role, catalyzes the hydrolysis of N-succinyl-L,L-diaminopimelic acid (SDAP), forming succinate and LL-2,6-diaminopimelate (DAP), an intermediate involved in the bacterial biosynthesis of lysine and meso-diaminopimelic acid, an essential component of bacterial cell walls. This Thioalkalivibrio sulfidiphilus (strain HL-EbGR7) protein is Succinyl-diaminopimelate desuccinylase.